A 170-amino-acid polypeptide reads, in one-letter code: Microfibrillar-associated protein 5 (170 aa).

Residues 1-20 (MTFFGPKVLLLLTALIMSSG) form the signal peptide. The Cell attachment site signature appears at 30–32 (RGD). Asparagine 76 carries N-linked (GlcNAc...) asparagine glycosylation.

The protein belongs to the MFAP family. Interacts with TGFB2. Interacts with BMP2. Interacts with FBN1 (via N-terminal domain) and FBN2. In terms of processing, forms intermolecular disulfide bonds either with other MAGP-2 molecules or with other components of the microfibrils. As to expression, associated with fibrillin-containing microfibrils of the developing nuchal ligament.

The protein resides in the secreted. It localises to the extracellular space. The protein localises to the extracellular matrix. In terms of biological role, may play a role in hematopoiesis. In the cardiovascular system, could regulate growth factors or participate in cell signaling in maintaining large vessel integrity. Component of the elastin-associated microfibrils. The chain is Microfibrillar-associated protein 5 (MFAP5) from Bos taurus (Bovine).